Consider the following 148-residue polypeptide: Arginine repressor (148 aa).

Belongs to the ArgR family.

Its subcellular location is the cytoplasm. The protein operates within amino-acid biosynthesis; L-arginine biosynthesis [regulation]. In terms of biological role, regulates arginine biosynthesis genes. The sequence is that of Arginine repressor from Acidobacterium capsulatum (strain ATCC 51196 / DSM 11244 / BCRC 80197 / JCM 7670 / NBRC 15755 / NCIMB 13165 / 161).